Reading from the N-terminus, the 116-residue chain is Ribosome-binding factor A (116 aa).

This sequence belongs to the RbfA family. In terms of assembly, monomer. Binds 30S ribosomal subunits, but not 50S ribosomal subunits or 70S ribosomes.

It is found in the cytoplasm. Functionally, one of several proteins that assist in the late maturation steps of the functional core of the 30S ribosomal subunit. Associates with free 30S ribosomal subunits (but not with 30S subunits that are part of 70S ribosomes or polysomes). Required for efficient processing of 16S rRNA. May interact with the 5'-terminal helix region of 16S rRNA. The chain is Ribosome-binding factor A from Streptococcus pneumoniae (strain ATCC BAA-255 / R6).